Consider the following 380-residue polypeptide: Cytochrome b (380 aa).

Transmembrane regions (helical) follow at residues 33 to 53, 77 to 98, 113 to 133, and 178 to 198; these read FGSL…FLAM, WLIR…YFHI, WNIG…GYVL, and FFAF…LHLL. Residues H83 and H97 each coordinate heme b. 2 residues coordinate heme b: H182 and H196. H201 contacts a ubiquinone. Helical transmembrane passes span 226–246, 288–308, 320–340, and 347–367; these read YKDL…ALFS, LGGV…PFLH, VSQF…WIGG, and FIII…VFFP.

The protein belongs to the cytochrome b family. As to quaternary structure, the cytochrome bc1 complex contains 3 respiratory subunits (MT-CYB, CYC1 and UQCRFS1), 2 core proteins (UQCRC1 and UQCRC2) and probably 6 low-molecular weight proteins. Heme b serves as cofactor.

The protein resides in the mitochondrion inner membrane. Component of the ubiquinol-cytochrome c reductase complex (complex III or cytochrome b-c1 complex) that is part of the mitochondrial respiratory chain. The b-c1 complex mediates electron transfer from ubiquinol to cytochrome c. Contributes to the generation of a proton gradient across the mitochondrial membrane that is then used for ATP synthesis. The sequence is that of Cytochrome b (mt-cyb) from Sarda sarda (Atlantic bonito).